A 237-amino-acid chain; its full sequence is Undecaprenyl-diphosphatase (237 aa).

A run of 7 helical transmembrane segments spans residues 38-58 (QTAVLHLGTLVSVVLFALDGI), 65-85 (WRIILNLIVSTIPAGVFGVLF), 92-112 (LFSSPRFLPLFFSATALILMF), 126-146 (MSFLDALLVGIAQLFALFPGI), 166-186 (ALQYSFLMSIPVVLGAGILGL), 191-211 (VTILAPIFAFLSGLFALYVLS), and 217-237 (GKIWQFSYYCLFVAILSYLAG).

The protein belongs to the UppP family.

The protein localises to the cell inner membrane. The enzyme catalyses di-trans,octa-cis-undecaprenyl diphosphate + H2O = di-trans,octa-cis-undecaprenyl phosphate + phosphate + H(+). Functionally, catalyzes the dephosphorylation of undecaprenyl diphosphate (UPP). Confers resistance to bacitracin. The chain is Undecaprenyl-diphosphatase from Thermotoga maritima (strain ATCC 43589 / DSM 3109 / JCM 10099 / NBRC 100826 / MSB8).